A 554-amino-acid polypeptide reads, in one-letter code: DM7 family protein GG17593 (554 aa).

This sequence belongs to the DM7 family.

The polypeptide is DM7 family protein GG17593 (Drosophila erecta (Fruit fly)).